The primary structure comprises 614 residues: Dihydroxy-acid dehydratase (614 aa).

Residue aspartate 81 participates in Mg(2+) binding. Cysteine 122 is a [2Fe-2S] cluster binding site. Positions 123 and 124 each coordinate Mg(2+). Lysine 124 is modified (N6-carboxylysine). Cysteine 195 lines the [2Fe-2S] cluster pocket. Glutamate 491 is a binding site for Mg(2+). Serine 517 serves as the catalytic Proton acceptor.

It belongs to the IlvD/Edd family. In terms of assembly, homodimer. Requires [2Fe-2S] cluster as cofactor. It depends on Mg(2+) as a cofactor.

It catalyses the reaction (2R)-2,3-dihydroxy-3-methylbutanoate = 3-methyl-2-oxobutanoate + H2O. The enzyme catalyses (2R,3R)-2,3-dihydroxy-3-methylpentanoate = (S)-3-methyl-2-oxopentanoate + H2O. The protein operates within amino-acid biosynthesis; L-isoleucine biosynthesis; L-isoleucine from 2-oxobutanoate: step 3/4. Its pathway is amino-acid biosynthesis; L-valine biosynthesis; L-valine from pyruvate: step 3/4. Its function is as follows. Functions in the biosynthesis of branched-chain amino acids. Catalyzes the dehydration of (2R,3R)-2,3-dihydroxy-3-methylpentanoate (2,3-dihydroxy-3-methylvalerate) into 2-oxo-3-methylpentanoate (2-oxo-3-methylvalerate) and of (2R)-2,3-dihydroxy-3-methylbutanoate (2,3-dihydroxyisovalerate) into 2-oxo-3-methylbutanoate (2-oxoisovalerate), the penultimate precursor to L-isoleucine and L-valine, respectively. The sequence is that of Dihydroxy-acid dehydratase from Rhodopseudomonas palustris (strain BisA53).